The sequence spans 129 residues: Small ribosomal subunit protein uS11 (129 aa).

This sequence belongs to the universal ribosomal protein uS11 family. Part of the 30S ribosomal subunit. Interacts with proteins S7 and S18. Binds to IF-3.

Functionally, located on the platform of the 30S subunit, it bridges several disparate RNA helices of the 16S rRNA. Forms part of the Shine-Dalgarno cleft in the 70S ribosome. This is Small ribosomal subunit protein uS11 from Hamiltonella defensa subsp. Acyrthosiphon pisum (strain 5AT).